The primary structure comprises 401 residues: S-adenosylmethionine synthase (401 aa).

ATP is bound at residue H16. D18 contributes to the Mg(2+) binding site. E44 is a binding site for K(+). L-methionine contacts are provided by E57 and Q109. Residues Q109–A119 are flexible loop. Residues D174–K176, D251, R257–K258, A274, and K278 each bind ATP. D251 contributes to the L-methionine binding site. An L-methionine-binding site is contributed by K282.

It belongs to the AdoMet synthase family. As to quaternary structure, homotetramer; dimer of dimers. Mg(2+) serves as cofactor. The cofactor is K(+).

The protein resides in the cytoplasm. The catalysed reaction is L-methionine + ATP + H2O = S-adenosyl-L-methionine + phosphate + diphosphate. It participates in amino-acid biosynthesis; S-adenosyl-L-methionine biosynthesis; S-adenosyl-L-methionine from L-methionine: step 1/1. In terms of biological role, catalyzes the formation of S-adenosylmethionine (AdoMet) from methionine and ATP. The overall synthetic reaction is composed of two sequential steps, AdoMet formation and the subsequent tripolyphosphate hydrolysis which occurs prior to release of AdoMet from the enzyme. The protein is S-adenosylmethionine synthase of Novosphingobium aromaticivorans (strain ATCC 700278 / DSM 12444 / CCUG 56034 / CIP 105152 / NBRC 16084 / F199).